A 160-amino-acid chain; its full sequence is Cytochrome b6-f complex subunit 4 (160 aa).

Helical transmembrane passes span 36–56 (LLYI…GLAV), 95–115 (LLGI…PFIE), and 128–148 (IAMS…IGAC).

This sequence belongs to the cytochrome b family. PetD subfamily. As to quaternary structure, the 4 large subunits of the cytochrome b6-f complex are cytochrome b6, subunit IV (17 kDa polypeptide, PetD), cytochrome f and the Rieske protein, while the 4 small subunits are PetG, PetL, PetM and PetN. The complex functions as a dimer.

It localises to the cellular thylakoid membrane. In terms of biological role, component of the cytochrome b6-f complex, which mediates electron transfer between photosystem II (PSII) and photosystem I (PSI), cyclic electron flow around PSI, and state transitions. In Prochlorococcus marinus (strain MIT 9312), this protein is Cytochrome b6-f complex subunit 4.